The chain runs to 200 residues: 3-isopropylmalate dehydratase small subunit (200 aa).

Belongs to the LeuD family. LeuD type 1 subfamily. Heterodimer of LeuC and LeuD.

The enzyme catalyses (2R,3S)-3-isopropylmalate = (2S)-2-isopropylmalate. The protein operates within amino-acid biosynthesis; L-leucine biosynthesis; L-leucine from 3-methyl-2-oxobutanoate: step 2/4. Its function is as follows. Catalyzes the isomerization between 2-isopropylmalate and 3-isopropylmalate, via the formation of 2-isopropylmaleate. This chain is 3-isopropylmalate dehydratase small subunit, found in Campylobacter jejuni (strain RM1221).